A 602-amino-acid polypeptide reads, in one-letter code: Elongation factor 4 (602 aa).

In terms of domain architecture, tr-type G spans 7-189 (KYIRNFSIVA…AIVNKVPAPD (183 aa)). Residues 19–24 (DHGKST) and 136–139 (NKID) each bind GTP.

It belongs to the TRAFAC class translation factor GTPase superfamily. Classic translation factor GTPase family. LepA subfamily.

It is found in the cell membrane. It catalyses the reaction GTP + H2O = GDP + phosphate + H(+). Functionally, required for accurate and efficient protein synthesis under certain stress conditions. May act as a fidelity factor of the translation reaction, by catalyzing a one-codon backward translocation of tRNAs on improperly translocated ribosomes. Back-translocation proceeds from a post-translocation (POST) complex to a pre-translocation (PRE) complex, thus giving elongation factor G a second chance to translocate the tRNAs correctly. Binds to ribosomes in a GTP-dependent manner. This Clostridium botulinum (strain ATCC 19397 / Type A) protein is Elongation factor 4.